We begin with the raw amino-acid sequence, 641 residues long: Leucine-rich repeat receptor-like serine/threonine/tyrosine-protein kinase SOBIR1 (641 aa).

An N-terminal signal peptide occupies residues 1-31 (MAVPTGSANLFLRPLILAVLSFLLLSSFVSS). Topologically, residues 32–284 (VEWLDIDSSD…KKKKSKKKKV (253 aa)) are extracellular. 5 LRR repeats span residues 112 to 133 (ELKE…DILS), 136 to 159 (QLEV…SSLS), 160 to 182 (RLRI…KNLR), 183 to 205 (NLEN…IVSF), and 207 to 228 (NLRF…VMSS). N154 is a glycosylation site (N-linked (GlcNAc...) asparagine). The N-linked (GlcNAc...) asparagine glycan is linked to N186. A disordered region spans residues 243–278 (AETPTSSPTNKPNNSTTSKAPKGAPKPGKLKKKKKK). The segment covering 245–259 (TPTSSPTNKPNNSTT) has biased composition (polar residues). N256 carries an N-linked (GlcNAc...) asparagine glycan. Residues 260–269 (SKAPKGAPKP) are compositionally biased toward low complexity. A helical membrane pass occupies residues 285–305 (AAWILGFVVGAIGGTISGFVF). The Cytoplasmic portion of the chain corresponds to 306 to 641 (SVLFKLIIQA…VRTMLSQIKH (336 aa)). Positions 347-641 (LASLEIIGRG…VRTMLSQIKH (295 aa)) constitute a Protein kinase domain. ATP is bound by residues 353-361 (IGRGGCGEV) and K377. D489 (proton acceptor) is an active-site residue.

This sequence belongs to the protein kinase superfamily. Ser/Thr protein kinase family. Interacts with CST. Interacts with RLP23. Component of a trimeric complex composed of RLP23, SOBIR1 and BAK1. BAK1 is recruited into a pre-formed RLP23-SOBIR1 complex in a ligand-dependent manner. In terms of processing, autophosphorylated on Ser, Thr and Tyr residues. Mostly present in leaves and flowers, with increasing expression in older flowers.

The protein resides in the cell membrane. The enzyme catalyses L-seryl-[protein] + ATP = O-phospho-L-seryl-[protein] + ADP + H(+). It catalyses the reaction L-threonyl-[protein] + ATP = O-phospho-L-threonyl-[protein] + ADP + H(+). It carries out the reaction L-tyrosyl-[protein] + ATP = O-phospho-L-tyrosyl-[protein] + ADP + H(+). Functionally, dual specificity kinase acting on both serine/threonine- and tyrosine-containing substrates. Acting as a counterplayer of BIR1, promotes the activation of plant defense and cell death. Component of the RLP23-SOBIR1-BAK1 complex that mediates NLP-triggered immunity. Functions as an inhibitor/regulator of abscission, probably by regulating membrane trafficking during abscission. The polypeptide is Leucine-rich repeat receptor-like serine/threonine/tyrosine-protein kinase SOBIR1 (SOBIR1) (Arabidopsis thaliana (Mouse-ear cress)).